Here is a 316-residue protein sequence, read N- to C-terminus: Small ribosomal subunit biogenesis GTPase RsgA (316 aa).

A CP-type G domain is found at 83-248; sequence DQYKSKLFAA…LIDSPGFQEF (166 aa). GTP is bound by residues 131 to 134 and 185 to 193; these read NKTD and GQSGMGKST. Positions 272, 277, 279, and 285 each coordinate Zn(2+).

The protein belongs to the TRAFAC class YlqF/YawG GTPase family. RsgA subfamily. In terms of assembly, monomer. Associates with 30S ribosomal subunit, binds 16S rRNA. It depends on Zn(2+) as a cofactor.

The protein resides in the cytoplasm. Functionally, one of several proteins that assist in the late maturation steps of the functional core of the 30S ribosomal subunit. Helps release RbfA from mature subunits. May play a role in the assembly of ribosomal proteins into the subunit. Circularly permuted GTPase that catalyzes slow GTP hydrolysis, GTPase activity is stimulated by the 30S ribosomal subunit. The chain is Small ribosomal subunit biogenesis GTPase RsgA from Paraburkholderia xenovorans (strain LB400).